The primary structure comprises 308 residues: rRNA 2'-O-methyltransferase fibrillarin 1 (308 aa).

The tract at residues 1 to 68 (MRPPVTGGRG…PRGGMKGGSK (68 aa)) is disordered. The span at 22-35 (GRGFGGGRSFGGGR) shows a compositional bias: gly residues. Residues 42–52 (SGPRGRGRGAP) show a composition bias toward basic residues. Residues 53-65 (RGRGGPPRGGMKG) are compositionally biased toward gly residues. S-adenosyl-L-methionine contacts are provided by residues 156–157 (TT), 175–176 (EF), 200–201 (DA), and 220–223 (DVAQ).

The protein belongs to the methyltransferase superfamily. Fibrillarin family. In terms of assembly, component of box C/D small nucleolar ribonucleoprotein (snoRNP) particles. Interacts with SKP1A. In terms of tissue distribution, expressed in roots, leaves and flowers. Expressed in stems.

Its subcellular location is the nucleus. The protein resides in the nucleolus. The catalysed reaction is a ribonucleotide in rRNA + S-adenosyl-L-methionine = a 2'-O-methylribonucleotide in rRNA + S-adenosyl-L-homocysteine + H(+). The enzyme catalyses L-glutaminyl-[histone H2A] + S-adenosyl-L-methionine = N(5)-methyl-L-glutaminyl-[histone H2A] + S-adenosyl-L-homocysteine + H(+). S-adenosyl-L-methionine-dependent methyltransferase that has the ability to methylate both RNAs and proteins. Involved in pre-rRNA processing. Utilizes the methyl donor S-adenosyl-L-methionine to catalyze the site-specific 2'-hydroxyl methylation of ribose moieties in pre-ribosomal RNA. Site specificity is provided by a guide RNA that base pairs with the substrate. Methylation occurs at a characteristic distance from the sequence involved in base pairing with the guide RNA. Also acts as a protein methyltransferase by mediating methylation of 'Gln-105' of histone H2A (H2AQ105me), a modification that impairs binding of the FACT complex and is specifically present at 35S ribosomal DNA locus. Binds monophosphate phosphoinositides in vitro. The chain is rRNA 2'-O-methyltransferase fibrillarin 1 from Arabidopsis thaliana (Mouse-ear cress).